A 985-amino-acid polypeptide reads, in one-letter code: Regulator of telomere elongation helicase 1 homolog (985 aa).

The region spanning 7–303 (AGIPVHFPFE…QDMAGDEPKD (297 aa)) is the Helicase ATP-binding domain. 42 to 49 (SPTGTGKT) contributes to the ATP binding site. Residues Cys146, Cys164, Cys173, and Cys209 each contribute to the [4Fe-4S] cluster site. Residues 252–255 (DEAH) carry the DEAH box motif. Phosphothreonine is present on Thr874.

Belongs to the helicase family. RAD3/XPD subfamily.

The protein localises to the nucleus. It catalyses the reaction ATP + H2O = ADP + phosphate + H(+). Its function is as follows. A probable ATP-dependent DNA helicase implicated in DNA repair and the maintenance of genomic stability. Acts as an anti-recombinase to counteract toxic recombination and limit crossover during meiosis. Regulates meiotic recombination and crossover homeostasis by physically dissociating strand invasion events and thereby promotes noncrossover repair by meiotic synthesis dependent strand annealing (SDSA) as well as disassembly of D loop recombination intermediates. The sequence is that of Regulator of telomere elongation helicase 1 homolog from Drosophila erecta (Fruit fly).